The chain runs to 380 residues: Ceramide synthase 2 (380 aa).

At 1–40 (MLQTLHDYFWWERLWLPVNLTWADLEDRDGRVYAKASDLY) the chain is on the lumenal side. The N-linked (GlcNAc...) asparagine glycan is linked to Asn-19. The chain crosses the membrane as a helical span at residues 41–61 (ITLPLALLFLIIRYFFELYVA). The homeobox-like stretch occupies residues 67–128 (LLNVKEKTRL…RRRRNQDRPS (62 aa)). One can recognise a TLC domain in the interval 131–332 (KKFREASWRF…ILRMAHKFIT (202 aa)). 4 helical membrane-spanning segments follow: residues 140–160 (FTFY…KPWF), 181–201 (WYYM…ASDV), 209–229 (QIIH…ANYV), and 264–284 (IFIV…PFWI). The Last loop motif motif lies at 291 to 300 (YPLELYPAFF). A helical transmembrane segment spans residues 304–324 (FFNFMMGVLQLLHIFWAYLIL). The Cytoplasmic portion of the chain corresponds to 325 to 380 (RMAHKFITGKVVEDERSDREETESSEGEEAAAGGGAKNRPLANGHPILNNNHRKND). The interval 338 to 380 (DERSDREETESSEGEEAAAGGGAKNRPLANGHPILNNNHRKND) is disordered. Ser-341 is subject to Phosphoserine. A compositionally biased stretch (acidic residues) spans 344–353 (EETESSEGEE). Thr-346 bears the Phosphothreonine mark. Ser-348 and Ser-349 each carry phosphoserine.

In terms of assembly, interacts with ATP6V0C, ASGR1, ASGR2 and SLC22A1/OCT1. Interacts with ELOV1, HSD17B12 and TECR. Interacts with NDUFS2. Post-translationally, acetylated. Deacetylation by SIRT3 increases enzyme activity and promotes mitochondrial ceramide accumulation. In terms of processing, phosphorylated at the C-terminus by CK2, leading to increase the ceramide synthase activity.

The protein localises to the endoplasmic reticulum membrane. It catalyses the reaction a very long-chain fatty acyl-CoA + a sphingoid base = an N-(very-long-chain fatty acyl)-sphingoid base + CoA + H(+). The catalysed reaction is docosanoyl-CoA + sphinganine = N-docosanoylsphinganine + CoA + H(+). It carries out the reaction tetracosanoyl-CoA + sphinganine = N-tetracosanoylsphinganine + CoA + H(+). The enzyme catalyses hexacosanoyl-CoA + sphinganine = N-hexacosanoylsphinganine + CoA + H(+). It catalyses the reaction (15Z)-tetracosenoyl-CoA + sphinganine = N-(15Z-tetracosenoyl)-sphinganine + CoA + H(+). The catalysed reaction is 2-hydroxytetracosanoyl-CoA + sphinganine = N-(2-hydroxytetracosanoyl)-sphinganine + CoA + H(+). It carries out the reaction 2-hydroxydocosanoyl-CoA + sphinganine = N-(2-hydroxydocosanoyl)-sphinganine + CoA + H(+). The enzyme catalyses 2-hydroxytetracosenoyl-CoA + sphinganine = N-(2-hydroxytetracosenoyl)-sphinganine + CoA + H(+). It catalyses the reaction tetracosenoyl-CoA + sphinganine = an N-tetracosenoylsphinganine + CoA + H(+). The catalysed reaction is hexacosenoyl-CoA + sphinganine = N-hexacosenoylsphinganine + CoA + H(+). It carries out the reaction tetracosanoyl-CoA + sphing-4-enine = N-tetracosanoyl-sphing-4-enine + CoA + H(+). The enzyme catalyses tetracosenoyl-CoA + sphing-4-enine = N-(tetracosenoyl)-sphing-4-enine + CoA + H(+). It catalyses the reaction heptadecasphing-4-enine + tetracosanoyl-CoA = N-tetracosanoyl-heptadecasphing-4-enine + CoA + H(+). The catalysed reaction is a fatty acyl-CoA + sphing-4-enine = an N-acylsphing-4-enine + CoA + H(+). It carries out the reaction sphing-4-enine + hexadecanoyl-CoA = N-hexadecanoylsphing-4-enine + CoA + H(+). The enzyme catalyses sphing-4-enine + octadecanoyl-CoA = N-octadecanoylsphing-4-enine + CoA + H(+). It catalyses the reaction eicosanoyl-CoA + sphing-4-enine = N-eicosanoyl-sphing-4-enine + CoA + H(+). The catalysed reaction is sphinganine + hexadecanoyl-CoA = N-hexadecanoylsphinganine + CoA + H(+). It carries out the reaction sphinganine + octadecanoyl-CoA = N-(octadecanoyl)-sphinganine + CoA + H(+). The enzyme catalyses sphinganine + (9Z)-octadecenoyl-CoA = N-(9Z-octadecenoyl)-sphinganine + CoA + H(+). It catalyses the reaction eicosanoyl-CoA + sphinganine = N-eicosanoylsphinganine + CoA + H(+). The protein operates within lipid metabolism; sphingolipid metabolism. Its activity is regulated as follows. Ceramide synthase activity is inhibited by sphingosine-1-phosphate. In terms of biological role, ceramide synthase that catalyzes the transfer of the acyl chain from acyl-CoA to a sphingoid base, with high selectivity toward very-long-chain fatty acyl-CoA (chain length C22-C27). N-acylates sphinganine and sphingosine bases to form dihydroceramides and ceramides in de novo synthesis and salvage pathways, respectively. Plays a non-redundant role in the synthesis of ceramides with very-long-chain fatty acids in kidney, liver and brain. Regulates the abundance of myelin-specific sphingolipids galactosylceramide and sulfatide that affects myelin sheath architecture and motor neuron functions. This Bos taurus (Bovine) protein is Ceramide synthase 2.